The primary structure comprises 147 residues: Cytochrome c' (147 aa).

Residues 1–21 (MKRMMIVAALAALTTTTVAQA) form the signal peptide. 6 residues coordinate heme c: Arg-31, Thr-87, Glu-88, Cys-137, Cys-140, and His-141.

Homodimer. In terms of processing, binds 1 heme c group covalently per subunit.

In terms of biological role, cytochrome c' is the most widely occurring bacterial c-type cytochrome. Cytochromes c' are high-spin proteins and the heme has no sixth ligand. Their exact function is not known. The chain is Cytochrome c' from Rhodospirillum rubrum (strain ATCC 11170 / ATH 1.1.1 / DSM 467 / LMG 4362 / NCIMB 8255 / S1).